The following is a 471-amino-acid chain: Mitochondrial distribution and morphology protein 10 (471 aa).

Disordered regions lie at residues 272–291 (TEMPSSSSSTSSTTTTSNHG), 374–394 (ADTPGVPPVEPPSTHNRDEEN), and 436–455 (SWAANSTAAGGGQSVGGGVS). A compositionally biased stretch (low complexity) spans 276 to 288 (SSSSSTSSTTTTS). Gly residues predominate over residues 444–455 (AGGGQSVGGGVS).

Belongs to the MDM10 family. In terms of assembly, component of the ER-mitochondria encounter structure (ERMES) or MDM complex, composed of mmm1, mdm10, mdm12 and mdm34. Associates with the mitochondrial outer membrane sorting assembly machinery SAM(core) complex.

It is found in the mitochondrion outer membrane. Component of the ERMES/MDM complex, which serves as a molecular tether to connect the endoplasmic reticulum and mitochondria. Components of this complex are involved in the control of mitochondrial shape and protein biogenesis and may function in phospholipid exchange. mdm10 is involved in the late assembly steps of the general translocase of the mitochondrial outer membrane (TOM complex). Functions in the tom40-specific route of the assembly of outer membrane beta-barrel proteins, including the association of tom40 with the receptor tom22 and small TOM proteins. Can associate with the SAM(core) complex as well as the mdm12-mmm1 complex, both involved in late steps of the major beta-barrel assembly pathway, that is responsible for biogenesis of all outer membrane beta-barrel proteins. May act as a switch that shuttles between both complexes and channels precursor proteins into the tom40-specific pathway. Plays a role in mitochondrial morphology and in the inheritance of mitochondria. This chain is Mitochondrial distribution and morphology protein 10 (mdmB), found in Neosartorya fischeri (strain ATCC 1020 / DSM 3700 / CBS 544.65 / FGSC A1164 / JCM 1740 / NRRL 181 / WB 181) (Aspergillus fischerianus).